Reading from the N-terminus, the 210-residue chain is FMN-dependent NADH:quinone oxidoreductase 8 (210 aa).

Residues serine 10 and 16-18 (SIS) contribute to the FMN site.

The protein belongs to the azoreductase type 1 family. Homodimer. The cofactor is FMN.

The enzyme catalyses 2 a quinone + NADH + H(+) = 2 a 1,4-benzosemiquinone + NAD(+). It carries out the reaction N,N-dimethyl-1,4-phenylenediamine + anthranilate + 2 NAD(+) = 2-(4-dimethylaminophenyl)diazenylbenzoate + 2 NADH + 2 H(+). Its function is as follows. Quinone reductase that provides resistance to thiol-specific stress caused by electrophilic quinones. Functionally, also exhibits azoreductase activity. Catalyzes the reductive cleavage of the azo bond in aromatic azo compounds to the corresponding amines. The chain is FMN-dependent NADH:quinone oxidoreductase 8 from Burkholderia lata (strain ATCC 17760 / DSM 23089 / LMG 22485 / NCIMB 9086 / R18194 / 383).